A 526-amino-acid polypeptide reads, in one-letter code: Na(+)/H(+) antiporter NhaB (526 aa).

10 helical membrane-spanning segments follow: residues 13-33 (FLGQ…VVNP), 98-118 (LLLI…LFVF), 133-155 (LAFC…VAVV), 208-228 (LLMH…VGEP), 244-264 (FFLR…LVCL), 309-329 (ALIG…VGLI), 355-375 (EALP…VIIE), 395-415 (LALF…VFVG), 452-472 (VATP…LAPL), and 481-501 (VWMA…CVQF).

This sequence belongs to the NhaB Na(+)/H(+) (TC 2.A.34) antiporter family.

The protein localises to the cell inner membrane. The catalysed reaction is 2 Na(+)(in) + 3 H(+)(out) = 2 Na(+)(out) + 3 H(+)(in). Na(+)/H(+) antiporter that extrudes sodium in exchange for external protons. This is Na(+)/H(+) antiporter NhaB from Serratia proteamaculans (strain 568).